The following is a 226-amino-acid chain: Putative type II restriction enzyme MjaVIP (226 aa).

The protein belongs to the BsaWI type II restriction endonuclease family.

It carries out the reaction Endonucleolytic cleavage of DNA to give specific double-stranded fragments with terminal 5'-phosphates.. A P subtype restriction enzyme that recognizes the double-stranded sequence 5'-CCGG-3'; the cleavage site is unknown. The chain is Putative type II restriction enzyme MjaVIP (mjaVIRP) from Methanocaldococcus jannaschii (strain ATCC 43067 / DSM 2661 / JAL-1 / JCM 10045 / NBRC 100440) (Methanococcus jannaschii).